The sequence spans 156 residues: Aspartate carbamoyltransferase regulatory chain (156 aa).

Residues C109, C114, C138, and C141 each contribute to the Zn(2+) site.

This sequence belongs to the PyrI family. In terms of assembly, contains catalytic and regulatory chains. Requires Zn(2+) as cofactor.

Involved in allosteric regulation of aspartate carbamoyltransferase. The sequence is that of Aspartate carbamoyltransferase regulatory chain from Baumannia cicadellinicola subsp. Homalodisca coagulata.